A 212-amino-acid polypeptide reads, in one-letter code: Hemagglutinin 2 (212 aa).

Its subcellular location is the secreted. Functionally, induces agglutination of neuraminidase-treated erythrocytes. The polypeptide is Hemagglutinin 2 (hag2) (Eikenella corrodens).